The following is a 161-amino-acid chain: MYSKESCERCEEMEKIIPSGQGKKSIFLSGSIRGGRQLLETYRFIYDALEEAGAEVLSWHVADPELEKTESKMTEQEIYARDLGLLEKSDALIAEVTVPSTGVGYEICRALVRKIPVLCLHMPDVAVSSMVLGNPDTLMEVRSYPDKEALKEIIIDFIRAL.

Substrate contacts are provided by residues 27–33, Y42, H60, E106, and 128–130; these read FLSGSIR and SSM.

It belongs to the 2'-deoxynucleoside 5'-phosphate N-hydrolase 1 family. In terms of assembly, monomer and homodimer.

It catalyses the reaction a pyrimidine 2'-deoxyribonucleoside 5'-phosphate + H2O = a pyrimidine nucleobase + 2-deoxy-D-ribose 5-phosphate. It carries out the reaction a purine 2'-deoxyribonucleoside 5'-phosphate + H2O = a purine nucleobase + 2-deoxy-D-ribose 5-phosphate. Functionally, catalyzes the cleavage of the N-glycosidic bond of deoxyribonucleoside 5'-monophosphates to yield deoxyribose 5-phosphate and a purine or pyrimidine base. The polypeptide is Putative 2'-deoxynucleoside 5'-phosphate N-hydrolase 1 (Methanosarcina mazei (strain ATCC BAA-159 / DSM 3647 / Goe1 / Go1 / JCM 11833 / OCM 88) (Methanosarcina frisia)).